A 91-amino-acid polypeptide reads, in one-letter code: Large ribosomal subunit protein uL23c (91 aa).

Belongs to the universal ribosomal protein uL23 family. In terms of assembly, part of the 50S ribosomal subunit.

It is found in the plastid. Its subcellular location is the chloroplast. In terms of biological role, binds to 23S rRNA. The protein is Large ribosomal subunit protein uL23c (rpl23) of Chaetosphaeridium globosum (Charophycean green alga).